The sequence spans 255 residues: Glutamate racemase (255 aa).

Substrate-binding positions include 7–8 (DS) and 39–40 (YG). C70 functions as the Proton donor/acceptor in the catalytic mechanism. 71-72 (NT) is a substrate binding site. The active-site Proton donor/acceptor is C181. 182 to 183 (TH) lines the substrate pocket.

This sequence belongs to the aspartate/glutamate racemases family.

It carries out the reaction L-glutamate = D-glutamate. It participates in cell wall biogenesis; peptidoglycan biosynthesis. Its function is as follows. Provides the (R)-glutamate required for cell wall biosynthesis. This chain is Glutamate racemase, found in Helicobacter pylori (strain G27).